The following is an 89-amino-acid chain: Small ribosomal subunit protein bS20 (89 aa).

This sequence belongs to the bacterial ribosomal protein bS20 family.

Binds directly to 16S ribosomal RNA. The polypeptide is Small ribosomal subunit protein bS20 (Helicobacter acinonychis (strain Sheeba)).